The sequence spans 252 residues: Pantothenate synthetase (252 aa).

29–36 provides a ligand contact to ATP; that stretch reads MGNLHAGH. Histidine 36 functions as the Proton donor in the catalytic mechanism. Glutamine 60 serves as a coordination point for (R)-pantoate. Glutamine 60 contacts beta-alanine. ATP is bound at residue 146 to 149; the sequence is GEKD. A (R)-pantoate-binding site is contributed by glutamine 152. Residues valine 175 and 183 to 186 each bind ATP; that span reads CSSR.

This sequence belongs to the pantothenate synthetase family. Homodimer.

Its subcellular location is the cytoplasm. The enzyme catalyses (R)-pantoate + beta-alanine + ATP = (R)-pantothenate + AMP + diphosphate + H(+). It participates in cofactor biosynthesis; (R)-pantothenate biosynthesis; (R)-pantothenate from (R)-pantoate and beta-alanine: step 1/1. Its function is as follows. Catalyzes the condensation of pantoate with beta-alanine in an ATP-dependent reaction via a pantoyl-adenylate intermediate. This chain is Pantothenate synthetase, found in Legionella pneumophila subsp. pneumophila (strain Philadelphia 1 / ATCC 33152 / DSM 7513).